A 417-amino-acid chain; its full sequence is NADH-quinone oxidoreductase subunit D (417 aa).

It belongs to the complex I 49 kDa subunit family. NDH-1 is composed of 14 different subunits. Subunits NuoB, C, D, E, F, and G constitute the peripheral sector of the complex.

The protein resides in the cell inner membrane. It carries out the reaction a quinone + NADH + 5 H(+)(in) = a quinol + NAD(+) + 4 H(+)(out). Its function is as follows. NDH-1 shuttles electrons from NADH, via FMN and iron-sulfur (Fe-S) centers, to quinones in the respiratory chain. The immediate electron acceptor for the enzyme in this species is believed to be ubiquinone. Couples the redox reaction to proton translocation (for every two electrons transferred, four hydrogen ions are translocated across the cytoplasmic membrane), and thus conserves the redox energy in a proton gradient. This chain is NADH-quinone oxidoreductase subunit D, found in Acidithiobacillus ferrooxidans (strain ATCC 53993 / BNL-5-31) (Leptospirillum ferrooxidans (ATCC 53993)).